A 760-amino-acid polypeptide reads, in one-letter code: MAAMFNHPWPNLTLIYFFFIVVLPFQSLSQFDSPQNIETFFPISSLSPVPPPLLPPSSNPSPPSNNSSSSDKKTITKAVLITAASTLLVAGVFFFCLQRCIIARRRRDRVGPVRVENTLPPYPPPPMTSAAVTTTTLAREGFTRFGGVKGLILDENGLDVLYWRKLQSQRERSGSFRKQIVTGEEEDEKEVIYYKNKKKTEPVTEIPLLRGRSSTSHSVIHNEDHQPPPQVKQSEPTPPPPPPSIAVKQSAPTPSPPPPIKKGSSPSPPPPPPVKKVGALSSSASKPPPAPVRGASGGETSKQVKLKPLHWDKVNPDSDHSMVWDKIDRGSFSFDGDLMEALFGYVAVGKKSPEQGDEKNPKSTQIFILDPRKSQNTAIVLKSLGMTREELVESLIEGNDFVPDTLERLARIAPTKEEQSAILEFDGDTAKLADAETFLFHLLKSVPTAFTRLNAFLFRANYYPEMAHHSKCLQTLDLACKELRSRGLFVKLLEAILKAGNRMNAGTARGNAQAFNLTALLKLSDVKSVDGKTSLLNFVVEEVVRSEGKRCVMNRRSHSLTRSGSSNYNGGNSSLQVMSKEEQEKEYLKLGLPVVGGLSSEFSNVKKAACVDYETVVATCSALAVRAKDAKTVIGECEDGEGGRFVKTMMTFLDSVEEEVKIAKGEERKVMELVKRTTDYYQAGAVTKGKNPLHLFVIVRDFLAMVDKVCLDIMRNMQRRKVGSPISPSSQRNAVKFPVLPPNFMSDRAWSDSGGSDSDM.

The signal sequence occupies residues 1 to 29 (MAAMFNHPWPNLTLIYFFFIVVLPFQSLS). Residues 52 to 63 (PLLPPSSNPSPP) show a composition bias toward pro residues. Residues 52–71 (PLLPPSSNPSPPSNNSSSSD) form a disordered region. Residues 78–98 (AVLITAASTLLVAGVFFFCLQ) traverse the membrane as a helical segment. The disordered stretch occupies residues 204-313 (TEIPLLRGRS…VKLKPLHWDK (110 aa)). Over residues 253 to 274 (TPSPPPPIKKGSSPSPPPPPPV) the composition is skewed to pro residues. Positions 296–732 (SGGETSKQVK…GSPISPSSQR (437 aa)) constitute an FH2 domain.

This sequence belongs to the formin-like family. Class-I subfamily. Interacts with profilin.

The protein localises to the cell membrane. Might be involved in the organization and polarity of the actin cytoskeleton. Interacts with the barbed end of actin filaments and nucleates actin-filament polymerization in vitro. This chain is Formin-like protein 8 (FH8), found in Arabidopsis thaliana (Mouse-ear cress).